Reading from the N-terminus, the 311-residue chain is Ribosomal RNA small subunit methyltransferase H (311 aa).

Residues 34-36 (GGH), D54, F78, D100, and Q107 contribute to the S-adenosyl-L-methionine site.

It belongs to the methyltransferase superfamily. RsmH family.

It localises to the cytoplasm. It catalyses the reaction cytidine(1402) in 16S rRNA + S-adenosyl-L-methionine = N(4)-methylcytidine(1402) in 16S rRNA + S-adenosyl-L-homocysteine + H(+). In terms of biological role, specifically methylates the N4 position of cytidine in position 1402 (C1402) of 16S rRNA. The sequence is that of Ribosomal RNA small subunit methyltransferase H from Hamiltonella defensa subsp. Acyrthosiphon pisum (strain 5AT).